Here is a 407-residue protein sequence, read N- to C-terminus: Imidazolonepropionase (407 aa).

Histidine 68 and histidine 70 together coordinate Fe(3+). Positions 68 and 70 each coordinate Zn(2+). Positions 77, 140, and 173 each coordinate 4-imidazolone-5-propanoate. Tyrosine 140 provides a ligand contact to N-formimidoyl-L-glutamate. Histidine 238 contacts Fe(3+). Residue histidine 238 participates in Zn(2+) binding. Glutamine 241 is a 4-imidazolone-5-propanoate binding site. Aspartate 313 lines the Fe(3+) pocket. Aspartate 313 is a Zn(2+) binding site. N-formimidoyl-L-glutamate is bound by residues asparagine 315 and glycine 317. Threonine 318 contacts 4-imidazolone-5-propanoate.

It belongs to the metallo-dependent hydrolases superfamily. HutI family. It depends on Zn(2+) as a cofactor. Fe(3+) serves as cofactor.

It localises to the cytoplasm. It catalyses the reaction 4-imidazolone-5-propanoate + H2O = N-formimidoyl-L-glutamate. It participates in amino-acid degradation; L-histidine degradation into L-glutamate; N-formimidoyl-L-glutamate from L-histidine: step 3/3. Functionally, catalyzes the hydrolytic cleavage of the carbon-nitrogen bond in imidazolone-5-propanoate to yield N-formimidoyl-L-glutamate. It is the third step in the universal histidine degradation pathway. The sequence is that of Imidazolonepropionase from Burkholderia orbicola (strain MC0-3).